A 378-amino-acid polypeptide reads, in one-letter code: Probable dihydroorotase-like protein (378 aa).

This sequence belongs to the metallo-dependent hydrolases superfamily. DHOase family. PyrC' subfamily.

Its function is as follows. Non-functional DHOase. In Helicobacter pylori (strain ATCC 700392 / 26695) (Campylobacter pylori), this protein is Probable dihydroorotase-like protein (pyrC').